The sequence spans 153 residues: Endoribonuclease YbeY (153 aa).

Zn(2+) contacts are provided by His-118, His-122, and His-128.

The protein belongs to the endoribonuclease YbeY family. Zn(2+) serves as cofactor.

It is found in the cytoplasm. Its function is as follows. Single strand-specific metallo-endoribonuclease involved in late-stage 70S ribosome quality control and in maturation of the 3' terminus of the 16S rRNA. The chain is Endoribonuclease YbeY from Chloroflexus aggregans (strain MD-66 / DSM 9485).